Here is a 307-residue protein sequence, read N- to C-terminus: uncharacterized protein (307 aa).

A run of 8 helical transmembrane segments spans residues 1–21 (MLIL…MNML), 52–72 (IVFT…IGFV), 99–119 (FIAI…LLFF), 133–153 (FLGL…AGPL), 174–194 (LLIG…IGIL), 208–228 (AMSV…MAAV), 242–262 (VVFN…ATGF), and 277–297 (FSLL…NLFY).

It localises to the cell membrane. This is an uncharacterized protein from Bacillus subtilis (strain 168).